Reading from the N-terminus, the 211-residue chain is CASP-like protein 1B1 (211 aa).

Positions 1–29 (MDLERGSKTPPSSAPAAAAATTTTSTCCS) are disordered. The Cytoplasmic segment spans residues 1–55 (MDLERGSKTPPSSAPAAAAATTTTSTCCSNKRPQLRDRLVALQPVVLRAAATLAT). Low complexity predominate over residues 9–26 (TPPSSAPAAAAATTTTST). Residues 56–76 (AVAAAVMALNAQSYTAVVAIV) form a helical membrane-spanning segment. Over 77-94 (GTRPLTQTFTTKFRDTPA) the chain is Extracellular. A helical membrane pass occupies residues 95–115 (FVYFVIANAIAAVYNLVMLLF). Topologically, residues 116–123 (RCLILRRR) are cytoplasmic. The helical transmembrane segment at 124–144 (MAGLVVHMLDMVIMALLATGA) threads the bilayer. Topologically, residues 145–176 (ATAAAMAELGKNGNVHARWNPICDRFGSFCSR) are extracellular. Residues 177 to 197 (GGVALASSFTGVALMLALNLL) form a helical membrane-spanning segment. Residues 198 to 211 (SAASNAQCSPGQYE) lie on the Cytoplasmic side of the membrane.

This sequence belongs to the Casparian strip membrane proteins (CASP) family. As to quaternary structure, homodimer and heterodimers.

It localises to the cell membrane. The sequence is that of CASP-like protein 1B1 from Sorghum bicolor (Sorghum).